A 101-amino-acid polypeptide reads, in one-letter code: Large ribosomal subunit protein bL28 (101 aa).

Belongs to the bacterial ribosomal protein bL28 family.

This chain is Large ribosomal subunit protein bL28, found in Rhodopseudomonas palustris (strain ATCC BAA-98 / CGA009).